The chain runs to 340 residues: MMNERAQHLLKALIERYIADGQPVASKTLSLLPGVELSSATVRNVLADLENMGLIASPHTSAGRVPTARGYRLFVDRLLTIRPLDELSRHELEANLQPDSPQRIVQAASSLLSELTSFAGVVLTPQRSDVAFRQIEFLRLSERRVLMILVTLDGDVQNHLLVTERDYTPSELIEAGNFINQHYAGQGLSAVAQRVESELKQLQGDIAELMAAAVKLGQQTLAKRSEDVVVSGGSRLLQVHDLSDDLSRLRELFGVFERKTELLKLLAQGREAQGVNIFIGEESGVMTLDECSVVTAPYCINGQVVGTLGVVGPTRMAYERVIPIVDITARLVSNALSFRE.

The protein belongs to the HrcA family.

In terms of biological role, negative regulator of class I heat shock genes (grpE-dnaK-dnaJ and groELS operons). Prevents heat-shock induction of these operons. The sequence is that of Heat-inducible transcription repressor HrcA from Chromobacterium violaceum (strain ATCC 12472 / DSM 30191 / JCM 1249 / CCUG 213 / NBRC 12614 / NCIMB 9131 / NCTC 9757 / MK).